Consider the following 320-residue polypeptide: Cytochrome f (320 aa).

An N-terminal signal peptide occupies residues 1–35 (MQTRKTFSWIKEQINRSISVSLMIYIITRPSISIA). 4 residues coordinate heme: Y36, C56, C59, and H60. A helical membrane pass occupies residues 286 to 306 (VQGLLFFLASVILAQIFLVLK).

Belongs to the cytochrome f family. As to quaternary structure, the 4 large subunits of the cytochrome b6-f complex are cytochrome b6, subunit IV (17 kDa polypeptide, petD), cytochrome f and the Rieske protein, while the 4 small subunits are PetG, PetL, PetM and PetN. The complex functions as a dimer. It depends on heme as a cofactor.

It localises to the plastid. The protein localises to the chloroplast thylakoid membrane. Functionally, component of the cytochrome b6-f complex, which mediates electron transfer between photosystem II (PSII) and photosystem I (PSI), cyclic electron flow around PSI, and state transitions. In Daucus carota (Wild carrot), this protein is Cytochrome f.